We begin with the raw amino-acid sequence, 103 residues long: Small ribosomal subunit protein uS10 (103 aa).

This sequence belongs to the universal ribosomal protein uS10 family. Part of the 30S ribosomal subunit.

Involved in the binding of tRNA to the ribosomes. The polypeptide is Small ribosomal subunit protein uS10 (Pseudomonas aeruginosa (strain LESB58)).